Here is a 123-residue protein sequence, read N- to C-terminus: MAVKKMVEAVFVVGLVVTMMNVWGAVPVEGAISCNQVVSAMTPCATYLIGNAATPAATCCPSIRGLDSQVKATPDRQAVCNCLKTQAKSYGVKLGKAANLPGLCKVTDLNVPISPNVDCSKVH.

An N-terminal signal peptide occupies residues 1 to 25 (MAVKKMVEAVFVVGLVVTMMNVWGA). Disulfide bonds link Cys34-Cys82, Cys44-Cys59, Cys60-Cys104, and Cys80-Cys119.

The protein belongs to the plant LTP family.

In terms of biological role, plant non-specific lipid-transfer proteins transfer phospholipids as well as galactolipids across membranes. May play a role in wax or cutin deposition in the cell walls of expanding epidermal cells and certain secretory tissues. The sequence is that of Non-specific lipid-transfer protein from Pinus taeda (Loblolly pine).